Reading from the N-terminus, the 251-residue chain is Phosphate import ATP-binding protein PstB (251 aa).

The ABC transporter domain occupies 5 to 246 (FDIRNFSVYY…PEKELTEKYL (242 aa)). 37 to 44 (GPSGCGKS) serves as a coordination point for ATP.

Belongs to the ABC transporter superfamily. Phosphate importer (TC 3.A.1.7) family. The complex is composed of two ATP-binding proteins (PstB), two transmembrane proteins (PstC and PstA) and a solute-binding protein (PstS).

The protein resides in the cell membrane. The catalysed reaction is phosphate(out) + ATP + H2O = ADP + 2 phosphate(in) + H(+). In terms of biological role, part of the ABC transporter complex PstSACB involved in phosphate import. Responsible for energy coupling to the transport system. In Archaeoglobus fulgidus (strain ATCC 49558 / DSM 4304 / JCM 9628 / NBRC 100126 / VC-16), this protein is Phosphate import ATP-binding protein PstB.